Reading from the N-terminus, the 600-residue chain is Zinc metalloproteinase-disintegrin-like stejnihagin-A (600 aa).

A signal peptide spans 1 to 20 (MIEVLLVTICLAVFPYQGSS). Positions 21 to 191 (IILESGNVND…KASQLVVTAE (171 aa)) are excised as a propeptide. Gln192 bears the Pyrrolidone carboxylic acid mark. Residues 198–389 (RYVKLAIVAD…YNPQCILNAP (192 aa)) form the Peptidase M12B domain. 3 disulfide bridges follow: Cys306-Cys384, Cys346-Cys368, and Cys348-Cys351. Asn317 carries an N-linked (GlcNAc...) asparagine glycan. His331 is a binding site for Zn(2+). Residue Glu332 is part of the active site. The Zn(2+) site is built by His335 and His341. The N-linked (GlcNAc...) asparagine glycan is linked to Asn367. Positions 397–483 (PPVCGNELLE…DCPTDDFHRN (87 aa)) constitute a Disintegrin domain. Residues Val399, Asn402, Leu404, Glu406, Glu409, and Asp412 each contribute to the Ca(2+) site. 14 cysteine pairs are disulfide-bonded: Cys400/Cys429, Cys411/Cys424, Cys413/Cys419, Cys423/Cys446, Cys437/Cys443, Cys442/Cys468, Cys455/Cys475, Cys462/Cys494, Cys487/Cys499, Cys506/Cys556, Cys521/Cys565, Cys534/Cys544, Cys551/Cys587, and Cys581/Cys593. A D/ECD-tripeptide motif is present at residues 461–463 (ECD). A glycan (N-linked (GlcNAc...) asparagine) is linked at Asn568.

The protein belongs to the venom metalloproteinase (M12B) family. P-III subfamily. P-IIIa sub-subfamily. Monomer. It depends on Zn(2+) as a cofactor. As to expression, expressed by the venom gland.

Its subcellular location is the secreted. Functionally, this metalloproteinase-disintegrin-like impairs hemostasis in the envenomed animal. The polypeptide is Zinc metalloproteinase-disintegrin-like stejnihagin-A (Trimeresurus stejnegeri (Chinese green tree viper)).